The primary structure comprises 425 residues: Enolase (425 aa).

Q163 serves as a coordination point for (2R)-2-phosphoglycerate. The active-site Proton donor is the E205. Residues D242, E286, and D313 each contribute to the Mg(2+) site. Positions 338, 367, 368, and 389 each coordinate (2R)-2-phosphoglycerate. K338 (proton acceptor) is an active-site residue.

It belongs to the enolase family. Mg(2+) is required as a cofactor.

The protein localises to the cytoplasm. The protein resides in the secreted. It localises to the cell surface. The catalysed reaction is (2R)-2-phosphoglycerate = phosphoenolpyruvate + H2O. It participates in carbohydrate degradation; glycolysis; pyruvate from D-glyceraldehyde 3-phosphate: step 4/5. In terms of biological role, catalyzes the reversible conversion of 2-phosphoglycerate (2-PG) into phosphoenolpyruvate (PEP). It is essential for the degradation of carbohydrates via glycolysis. The protein is Enolase of Helicobacter hepaticus (strain ATCC 51449 / 3B1).